The following is a 459-amino-acid chain: Argininosuccinate lyase (459 aa).

The protein belongs to the lyase 1 family. Argininosuccinate lyase subfamily.

Its subcellular location is the cytoplasm. It carries out the reaction 2-(N(omega)-L-arginino)succinate = fumarate + L-arginine. It functions in the pathway amino-acid biosynthesis; L-arginine biosynthesis; L-arginine from L-ornithine and carbamoyl phosphate: step 3/3. The sequence is that of Argininosuccinate lyase from Prochlorococcus marinus (strain MIT 9515).